The sequence spans 840 residues: Cytosolic carboxypeptidase 2 (840 aa).

The Peptidase M14 domain occupies 358-628 (YPYTYTDLQC…HVCDTLLDFC (271 aa)). Residues histidine 424, glutamate 427, and histidine 520 each coordinate Zn(2+). The active-site Proton donor/acceptor is glutamate 592. Residues 706-719 (MFKKKKKKSLQTRK) are compositionally biased toward basic residues. Disordered regions lie at residues 706-726 (MFKK…EQYQ) and 758-789 (ESSS…LDPS).

This sequence belongs to the peptidase M14 family. Interacts with RARRES1, KIF11 and MAPRE1. Zn(2+) is required as a cofactor.

The protein resides in the cytoplasm. Its subcellular location is the cytosol. It is found in the cytoskeleton. The protein localises to the microtubule organizing center. It localises to the centrosome. The protein resides in the centriole. Its subcellular location is the cilium basal body. The enzyme catalyses (L-glutamyl)(n+1)-gamma-L-glutamyl-L-glutamyl-[protein] + H2O = (L-glutamyl)(n)-gamma-L-glutamyl-L-glutamyl-[protein] + L-glutamate. Its activity is regulated as follows. Inhibited by RARRES1. Metallocarboxypeptidase that mediates deglutamylation of tubulin and non-tubulin target proteins. Catalyzes the removal of polyglutamate side chains present on the gamma-carboxyl group of glutamate residues within the C-terminal tail of tubulin protein. Specifically cleaves tubulin long-side-chains, while it is not able to remove the branching point glutamate. Also catalyzes the removal of polyglutamate residues from the carboxy-terminus of non-tubulin proteins such as MYLK. In Macaca fascicularis (Crab-eating macaque), this protein is Cytosolic carboxypeptidase 2 (AGBL2).